We begin with the raw amino-acid sequence, 464 residues long: 3-isopropylmalate dehydratase large subunit (464 aa).

Residues cysteine 337, cysteine 397, and cysteine 400 each contribute to the [4Fe-4S] cluster site.

The protein belongs to the aconitase/IPM isomerase family. LeuC type 1 subfamily. Heterodimer of LeuC and LeuD. [4Fe-4S] cluster serves as cofactor.

It carries out the reaction (2R,3S)-3-isopropylmalate = (2S)-2-isopropylmalate. The protein operates within amino-acid biosynthesis; L-leucine biosynthesis; L-leucine from 3-methyl-2-oxobutanoate: step 2/4. Catalyzes the isomerization between 2-isopropylmalate and 3-isopropylmalate, via the formation of 2-isopropylmaleate. This is 3-isopropylmalate dehydratase large subunit from Bacillus cereus (strain AH820).